A 386-amino-acid chain; its full sequence is Leupaxin (386 aa).

Met1 carries the N-acetylmethionine modification. Residues Glu3 to Thr15 carry the LD motif 1 motif. Residues Arg13–Asp41 are disordered. Phosphoserine is present on Ser19. At Tyr22 the chain carries Phosphotyrosine. Position 54 is a phosphoserine (Ser54). Tyr62 is modified (phosphotyrosine). 2 short sequence motifs (LD motif) span residues Asn70 to Pro82 and Gln92 to Met103. Phosphotyrosine; by LYN is present on Tyr72. Ser81 carries the post-translational modification Phosphoserine. LIM zinc-binding domains lie at Gly150 to Ser208, Pro209 to Ser267, Pro268 to Gly326, and Thr327 to Leu386.

It belongs to the paxillin family. Interacts with PTPN22. Interacts with unphosphorylated ITGA4. Interacts with PTK2B/PYK2, PTPN12, AR and SRF. Interacts (via LD motif 3) with LYN and the interaction is induced upon B-cell antigen receptor (BCR) activation. Interacts (via LD motif 3) with PTK2/FAK. Post-translationally, phosphorylated on tyrosine residues. Phosphorylation on Tyr-72 is important for its inhibitory function. Bombesin stimulates phosphorylation on Tyr-22, Tyr-62 and Tyr-72. Macrophages, monocytes and osteoclasts (at protein level). Strongly expressed in cells and tissues of hematopoietic origin. Highest expression in lymphoid tissues such as spleen, lymph node, thymus and appendix and in the vascular smooth muscle. Lower levels in bone marrow and fetal liver. Also expressed in peripheral blood lymphocytes and a number of hematopoietic cell lines. Very low levels found in epithelial cell lines. Expressed in prostate cancer (PCa) cells and its expression intensity is directly linked to PCa progression.

It localises to the cytoplasm. Its subcellular location is the cell junction. The protein resides in the focal adhesion. The protein localises to the nucleus. It is found in the perinuclear region. It localises to the cell projection. Its subcellular location is the podosome. The protein resides in the cell membrane. Functionally, transcriptional coactivator for androgen receptor (AR) and serum response factor (SRF). Contributes to the regulation of cell adhesion, spreading and cell migration and acts as a negative regulator in integrin-mediated cell adhesion events. Suppresses the integrin-induced tyrosine phosphorylation of paxillin (PXN). May play a critical role as an adapter protein in the formation of the adhesion zone in osteoclasts. Negatively regulates B-cell antigen receptor (BCR) signaling. In Homo sapiens (Human), this protein is Leupaxin (LPXN).